We begin with the raw amino-acid sequence, 36 residues long: Dolichyl-diphosphooligosaccharide--protein glycosyltransferase subunit OST4 (36 aa).

Residues 1–9 are Lumenal-facing; the sequence is MISDEQLNS. A helical transmembrane segment spans residues 10–28; sequence LAITFGIVMMTLIVIYHAV. Topologically, residues 29–36 are cytoplasmic; the sequence is DSTMSPKN.

Belongs to the OST4 family. In terms of assembly, component of the oligosaccharyltransferase (OST) complex, which appears to exist in two assemblies comprising OST1, OST2, OST4, OST5, STT3, SWP1, WPB1, and either OST3 or OST6. OST assembly occurs through the formation of 3 subcomplexes. Subcomplex 1 contains OST1 and OST5, subcomplex 2 contains STT3, OST3, and OST4, and subcomplex 3 contains OST2, WBP1, and SWP1. Interacts with SEC61, SBH1 and SSS1.

The protein localises to the endoplasmic reticulum membrane. It participates in protein modification; protein glycosylation. Its function is as follows. Subunit of the oligosaccharyl transferase (OST) complex that catalyzes the initial transfer of a defined glycan (Glc(3)Man(9)GlcNAc(2) in eukaryotes) from the lipid carrier dolichol-pyrophosphate to an asparagine residue within an Asn-X-Ser/Thr consensus motif in nascent polypeptide chains, the first step in protein N-glycosylation. N-glycosylation occurs cotranslationally and the complex associates with the Sec61 complex at the channel-forming translocon complex that mediates protein translocation across the endoplasmic reticulum (ER). All subunits are required for a maximal enzyme activity. This chain is Dolichyl-diphosphooligosaccharide--protein glycosyltransferase subunit OST4 (OST4), found in Saccharomyces cerevisiae (strain ATCC 204508 / S288c) (Baker's yeast).